The sequence spans 362 residues: MSKILQFQLQHFRNIEQASLTFGEGLNLIVGDNAAGKTALIEAIWTLASGRSFRTAKPHQLIQQNQSELVLFGTLTEADRIHKIGLARTSDKVTLKIDGELAKTQADMSAKLPVQLLTPESHRLLEEGPKARRQFMDWGCFHHNADFIHLWRHYQRALKQRNHALKKRLPASQIQLWDAQLVDAAEKIDVIRADYITRLTPYLVEFCQALMPEITVSPECHYRPGWPKTAESYRQLLADNFAKDTLQGHTQYGSHRADIKFRFNGQEALMILSRGQQKLFVCALLLAQATLYQQHSQNPVIMLIDDLPAELDAKHRETLLKLLNLLDIQHILTSTAQDLIPVLEPEKAKIWRIQHGELIEQQ.

31 to 38 (GDNAAGKT) contributes to the ATP binding site.

It belongs to the RecF family.

Its subcellular location is the cytoplasm. In terms of biological role, the RecF protein is involved in DNA metabolism; it is required for DNA replication and normal SOS inducibility. RecF binds preferentially to single-stranded, linear DNA. It also seems to bind ATP. This is DNA replication and repair protein RecF from Hydrogenovibrio crunogenus (strain DSM 25203 / XCL-2) (Thiomicrospira crunogena).